The chain runs to 390 residues: Chorismate synthase (390 aa).

The NADP(+) site is built by R40 and R46. FMN contacts are provided by residues 129–131, 249–250, G294, 309–313, and R335; these read RAS, QA, and KPIPT.

The protein belongs to the chorismate synthase family. Homotetramer. FMNH2 is required as a cofactor.

It catalyses the reaction 5-O-(1-carboxyvinyl)-3-phosphoshikimate = chorismate + phosphate. It participates in metabolic intermediate biosynthesis; chorismate biosynthesis; chorismate from D-erythrose 4-phosphate and phosphoenolpyruvate: step 7/7. Catalyzes the anti-1,4-elimination of the C-3 phosphate and the C-6 proR hydrogen from 5-enolpyruvylshikimate-3-phosphate (EPSP) to yield chorismate, which is the branch point compound that serves as the starting substrate for the three terminal pathways of aromatic amino acid biosynthesis. This reaction introduces a second double bond into the aromatic ring system. The polypeptide is Chorismate synthase (Desulforudis audaxviator (strain MP104C)).